The following is a 248-amino-acid chain: Protein FAM133A (248 aa).

The segment covering 68 to 80 has biased composition (basic and acidic residues); that stretch reads NWKKELEKSREKL. A disordered region spans residues 68–248; that stretch reads NWKKELEKSR…KKSGSSHKSR (181 aa). Basic residues predominate over residues 90–102; it reads KRERKKKRKKKSC. Residues 103 to 118 are compositionally biased toward low complexity; sequence RSSSSSSSSDSSSSSS. Basic residues predominate over residues 127 to 138; it reads QGKRRKKKKNRS. Basic and acidic residues-rich tracts occupy residues 147-156, 163-175, and 211-220; these read HESESESKES, SKDE…DVRS, and RCEEREQAKE. Over residues 221–248 the composition is skewed to basic residues; it reads KVKKKKKKQHKKHSKKKKKKSGSSHKSR.

This sequence belongs to the FAM133 family.

The polypeptide is Protein FAM133A (FAM133A) (Homo sapiens (Human)).